The chain runs to 185 residues: Elongation factor P (185 aa).

The protein belongs to the elongation factor P family.

The protein resides in the cytoplasm. The protein operates within protein biosynthesis; polypeptide chain elongation. In terms of biological role, involved in peptide bond synthesis. Stimulates efficient translation and peptide-bond synthesis on native or reconstituted 70S ribosomes in vitro. Probably functions indirectly by altering the affinity of the ribosome for aminoacyl-tRNA, thus increasing their reactivity as acceptors for peptidyl transferase. The protein is Elongation factor P of Mesomycoplasma hyopneumoniae (strain 232) (Mycoplasma hyopneumoniae).